The sequence spans 818 residues: Beta-glucosidase (818 aa).

Residue Asp-222 is part of the active site. The 153-residue stretch at 386–538 folds into the PA14 domain; that stretch reads VFSGEMTVEY…GDAGIAEAVE (153 aa).

The protein belongs to the glycosyl hydrolase 3 family.

The protein resides in the cytoplasm. The catalysed reaction is Hydrolysis of terminal, non-reducing beta-D-glucosyl residues with release of beta-D-glucose.. In terms of biological role, involved in modifying a vir-inducing plant signal molecule. Hydrolyzes coniferin but not cellobiose. The chain is Beta-glucosidase (cbg-1) from Rhizobium radiobacter (Agrobacterium tumefaciens).